Reading from the N-terminus, the 294-residue chain is Ribosomal protein L11 methyltransferase (294 aa).

Positions 146, 167, 189, and 231 each coordinate S-adenosyl-L-methionine.

The protein belongs to the methyltransferase superfamily. PrmA family.

The protein localises to the cytoplasm. It carries out the reaction L-lysyl-[protein] + 3 S-adenosyl-L-methionine = N(6),N(6),N(6)-trimethyl-L-lysyl-[protein] + 3 S-adenosyl-L-homocysteine + 3 H(+). Methylates ribosomal protein L11. The chain is Ribosomal protein L11 methyltransferase from Aliivibrio salmonicida (strain LFI1238) (Vibrio salmonicida (strain LFI1238)).